The primary structure comprises 210 residues: Thiamine-phosphate synthase (210 aa).

4-amino-2-methyl-5-(diphosphooxymethyl)pyrimidine-binding positions include 38–42 and Asn-70; that span reads QLREK. 2 residues coordinate Mg(2+): Asp-71 and Asp-90. Residue Ser-109 coordinates 4-amino-2-methyl-5-(diphosphooxymethyl)pyrimidine. Residue 139–141 participates in 2-[(2R,5Z)-2-carboxy-4-methylthiazol-5(2H)-ylidene]ethyl phosphate binding; it reads TPT. Lys-142 contacts 4-amino-2-methyl-5-(diphosphooxymethyl)pyrimidine. 2-[(2R,5Z)-2-carboxy-4-methylthiazol-5(2H)-ylidene]ethyl phosphate contacts are provided by residues Gly-170 and 190–191; that span reads VS.

This sequence belongs to the thiamine-phosphate synthase family. The cofactor is Mg(2+).

It catalyses the reaction 2-[(2R,5Z)-2-carboxy-4-methylthiazol-5(2H)-ylidene]ethyl phosphate + 4-amino-2-methyl-5-(diphosphooxymethyl)pyrimidine + 2 H(+) = thiamine phosphate + CO2 + diphosphate. The catalysed reaction is 2-(2-carboxy-4-methylthiazol-5-yl)ethyl phosphate + 4-amino-2-methyl-5-(diphosphooxymethyl)pyrimidine + 2 H(+) = thiamine phosphate + CO2 + diphosphate. The enzyme catalyses 4-methyl-5-(2-phosphooxyethyl)-thiazole + 4-amino-2-methyl-5-(diphosphooxymethyl)pyrimidine + H(+) = thiamine phosphate + diphosphate. The protein operates within cofactor biosynthesis; thiamine diphosphate biosynthesis; thiamine phosphate from 4-amino-2-methyl-5-diphosphomethylpyrimidine and 4-methyl-5-(2-phosphoethyl)-thiazole: step 1/1. Its function is as follows. Condenses 4-methyl-5-(beta-hydroxyethyl)thiazole monophosphate (THZ-P) and 2-methyl-4-amino-5-hydroxymethyl pyrimidine pyrophosphate (HMP-PP) to form thiamine monophosphate (TMP). The protein is Thiamine-phosphate synthase of Leptospira biflexa serovar Patoc (strain Patoc 1 / Ames).